A 325-amino-acid polypeptide reads, in one-letter code: HPr kinase/phosphorylase (325 aa).

Catalysis depends on residues His-152 and Lys-173. Position 167–174 (167–174 (GESGLGKS)) interacts with ATP. Ser-174 provides a ligand contact to Mg(2+). Asp-191 (proton acceptor; for phosphorylation activity. Proton donor; for dephosphorylation activity) is an active-site residue. The segment at 215-224 (LEVRGIGLLD) is important for the catalytic mechanism of both phosphorylation and dephosphorylation. Glu-216 contributes to the Mg(2+) binding site. Arg-258 is an active-site residue. Positions 279–284 (AVDAGR) are important for the catalytic mechanism of dephosphorylation.

Belongs to the HPrK/P family. In terms of assembly, homohexamer. Mg(2+) is required as a cofactor.

The enzyme catalyses [HPr protein]-L-serine + ATP = [HPr protein]-O-phospho-L-serine + ADP + H(+). It catalyses the reaction [HPr protein]-O-phospho-L-serine + phosphate + H(+) = [HPr protein]-L-serine + diphosphate. Functionally, catalyzes the ATP- as well as the pyrophosphate-dependent phosphorylation of a specific serine residue in HPr, a phosphocarrier protein of the phosphoenolpyruvate-dependent sugar phosphotransferase system (PTS). HprK/P also catalyzes the pyrophosphate-producing, inorganic phosphate-dependent dephosphorylation (phosphorolysis) of seryl-phosphorylated HPr (P-Ser-HPr). This chain is HPr kinase/phosphorylase, found in Leptothrix cholodnii (strain ATCC 51168 / LMG 8142 / SP-6) (Leptothrix discophora (strain SP-6)).